Consider the following 62-residue polypeptide: uncharacterized protein (62 aa).

This is an uncharacterized protein from Escherichia coli (strain K12).